We begin with the raw amino-acid sequence, 114 residues long: Large ribosomal subunit protein uL22 (114 aa).

It belongs to the universal ribosomal protein uL22 family. In terms of assembly, part of the 50S ribosomal subunit.

Its function is as follows. This protein binds specifically to 23S rRNA; its binding is stimulated by other ribosomal proteins, e.g. L4, L17, and L20. It is important during the early stages of 50S assembly. It makes multiple contacts with different domains of the 23S rRNA in the assembled 50S subunit and ribosome. The globular domain of the protein is located near the polypeptide exit tunnel on the outside of the subunit, while an extended beta-hairpin is found that lines the wall of the exit tunnel in the center of the 70S ribosome. The protein is Large ribosomal subunit protein uL22 of Streptococcus suis (strain 98HAH33).